The primary structure comprises 388 residues: LIM/homeobox protein Lhx9 (388 aa).

LIM zinc-binding domains are found at residues 69-130 and 131-193; these read ISDR…CHLG and ISAS…LSYT. Disordered regions lie at residues 239–263, 321–356, and 369–388; these read ENEADHLDRDQQPYPPSQKTKRMRT, ENGGVDKADGTSLPAPPSADSGALTPPGTATTLTDL, and SNMDSHESGSPSQTTLTNLF. Residues 267 to 326 constitute a DNA-binding region (homeobox); sequence HHQLRTMKSYFAINHNPDAKDLKQLAQKTGLTKRVLQVWFQNARAKFRRNLLRQENGGVD. The segment covering 344 to 356 has biased composition (low complexity); sequence LTPPGTATTLTDL. Polar residues predominate over residues 376–388; that stretch reads SGSPSQTTLTNLF.

In terms of assembly, interacts with LDB1 and LDB2.

Its subcellular location is the nucleus. In terms of biological role, involved in gonadal development. The protein is LIM/homeobox protein Lhx9 (Lhx9) of Rattus norvegicus (Rat).